The chain runs to 120 residues: UPF0231 protein YacL (120 aa).

Belongs to the UPF0231 family.

The chain is UPF0231 protein YacL from Salmonella typhi.